A 231-amino-acid chain; its full sequence is Casein kinase II subunit beta (231 aa).

It belongs to the casein kinase 2 subunit beta family. In terms of assembly, tetramer composed of two alpha chains, one beta chain and one beta' chain. Phosphorylated by alpha subunit.

In terms of biological role, regulatory subunit of casein kinase II/CK2. As part of the kinase complex regulates the basal catalytic activity of the alpha subunit a constitutively active serine/threonine-protein kinase that phosphorylates a large number of substrates containing acidic residues C-terminal to the phosphorylated serine or threonine. This chain is Casein kinase II subunit beta, found in Schizosaccharomyces pombe (strain 972 / ATCC 24843) (Fission yeast).